The chain runs to 462 residues: Histidine--tRNA ligase (462 aa).

This sequence belongs to the class-II aminoacyl-tRNA synthetase family. In terms of assembly, homodimer.

It is found in the cytoplasm. The catalysed reaction is tRNA(His) + L-histidine + ATP = L-histidyl-tRNA(His) + AMP + diphosphate + H(+). This Nostoc sp. (strain PCC 7120 / SAG 25.82 / UTEX 2576) protein is Histidine--tRNA ligase (hisS).